The chain runs to 151 residues: Transcriptional regulator SyrB (151 aa).

The disordered stretch occupies residues 1 to 61 (MADESNTGPV…RYSEQERNDK (61 aa)). Residues 33 to 48 (PQKAAAEPAQPKAPAA) are compositionally biased toward low complexity. Residues 52–61 (RYSEQERNDK) show a composition bias toward basic and acidic residues.

The protein belongs to the SyrB family.

Responsible for the repression of SyrM activity. The sequence is that of Transcriptional regulator SyrB (syrB) from Rhizobium meliloti (strain 1021) (Ensifer meliloti).